A 261-amino-acid chain; its full sequence is Putative methyltransferase MJ0046 (261 aa).

This sequence belongs to the methyltransferase superfamily.

The sequence is that of Putative methyltransferase MJ0046 from Methanocaldococcus jannaschii (strain ATCC 43067 / DSM 2661 / JAL-1 / JCM 10045 / NBRC 100440) (Methanococcus jannaschii).